A 222-amino-acid polypeptide reads, in one-letter code: UPF0502 protein Lcho_2066 (222 aa).

The protein belongs to the UPF0502 family.

This Leptothrix cholodnii (strain ATCC 51168 / LMG 8142 / SP-6) (Leptothrix discophora (strain SP-6)) protein is UPF0502 protein Lcho_2066.